A 131-amino-acid polypeptide reads, in one-letter code: Large-conductance mechanosensitive channel (131 aa).

2 helical membrane-spanning segments follow: residues 21–41 (VGVI…ADVI) and 76–96 (GMFI…FLMI).

This sequence belongs to the MscL family. As to quaternary structure, homopentamer.

The protein localises to the cell inner membrane. In terms of biological role, channel that opens in response to stretch forces in the membrane lipid bilayer. May participate in the regulation of osmotic pressure changes within the cell. The sequence is that of Large-conductance mechanosensitive channel from Histophilus somni (strain 129Pt) (Haemophilus somnus).